A 458-amino-acid polypeptide reads, in one-letter code: Siroheme synthase (458 aa).

Residues 1-203 form a precorrin-2 dehydrogenase /sirohydrochlorin ferrochelatase region; that stretch reads MDYLPLFFDL…GNLAAAEQLI (203 aa). Residues 22–23 and 43–44 each bind NAD(+); these read TI and PK. Serine 128 is subject to Phosphoserine. Positions 216 to 458 are uroporphyrinogen-III C-methyltransferase; it reads GEVYLVGAGP…RCHEKLNWYK (243 aa). Residue proline 225 participates in S-adenosyl-L-methionine binding. Catalysis depends on aspartate 248, which acts as the Proton acceptor. The active-site Proton donor is lysine 270. S-adenosyl-L-methionine is bound by residues 301–303, isoleucine 306, 331–332, methionine 383, and glycine 412; these read GGD and TA.

The protein in the N-terminal section; belongs to the precorrin-2 dehydrogenase / sirohydrochlorin ferrochelatase family. It in the C-terminal section; belongs to the precorrin methyltransferase family.

It carries out the reaction uroporphyrinogen III + 2 S-adenosyl-L-methionine = precorrin-2 + 2 S-adenosyl-L-homocysteine + H(+). The enzyme catalyses precorrin-2 + NAD(+) = sirohydrochlorin + NADH + 2 H(+). It catalyses the reaction siroheme + 2 H(+) = sirohydrochlorin + Fe(2+). Its pathway is cofactor biosynthesis; adenosylcobalamin biosynthesis; precorrin-2 from uroporphyrinogen III: step 1/1. It participates in cofactor biosynthesis; adenosylcobalamin biosynthesis; sirohydrochlorin from precorrin-2: step 1/1. The protein operates within porphyrin-containing compound metabolism; siroheme biosynthesis; precorrin-2 from uroporphyrinogen III: step 1/1. It functions in the pathway porphyrin-containing compound metabolism; siroheme biosynthesis; siroheme from sirohydrochlorin: step 1/1. Its pathway is porphyrin-containing compound metabolism; siroheme biosynthesis; sirohydrochlorin from precorrin-2: step 1/1. Multifunctional enzyme that catalyzes the SAM-dependent methylations of uroporphyrinogen III at position C-2 and C-7 to form precorrin-2 via precorrin-1. Then it catalyzes the NAD-dependent ring dehydrogenation of precorrin-2 to yield sirohydrochlorin. Finally, it catalyzes the ferrochelation of sirohydrochlorin to yield siroheme. The sequence is that of Siroheme synthase from Saccharophagus degradans (strain 2-40 / ATCC 43961 / DSM 17024).